A 485-amino-acid chain; its full sequence is Efflux pump bik6 (485 aa).

The next 6 membrane-spanning stretches (helical) occupy residues 42 to 62 (VYTTALWALTTCWITFASAIY), 86 to 106 (LLIFGFALGPMLWAPLCEVYG), 108 to 128 (KWPALAPYFISAAFAFGTATA), 139 to 159 (FFAGVFGSSPISITGGSIVDI), 172 to 192 (YGITIAAAPTLGPIIGGAFIA), and 199 to 219 (WTEYLTGIVMMVQFVLDALWL). N241 carries N-linked (GlcNAc...) asparagine glycosylation. 6 helical membrane-spanning segments follow: residues 269-289 (MLLDPICLLLTIYTSFVYAIL), 306-326 (WGPVVSQLPFLSLLIGCLFAA), 353-373 (LPPMMVGGFAFSAGLFLFGWT), 379-399 (SSPWPSIIGVFLTGVGFTTIF), 417-437 (AIAANTFVRSMAAGAFPLFVW), and 447-467 (WGSTIFACISVLLLPAPFLFF).

The protein belongs to the major facilitator superfamily.

Its subcellular location is the membrane. Efflux pump; part of the gene cluster that mediates the biosynthesis of bikaverin, a red pigment also considered as a mycotoxin. In Gibberella fujikuroi (strain CBS 195.34 / IMI 58289 / NRRL A-6831) (Bakanae and foot rot disease fungus), this protein is Efflux pump bik6.